Reading from the N-terminus, the 360-residue chain is (+)-6a-hydroxymaackiain 3-O-methyltransferase 1 (360 aa).

Residues 202-205 (VAGG), aspartate 226, 226-227 (DQ), 246-247 (DM), and lysine 260 contribute to the S-adenosyl-L-methionine site. The active-site Proton acceptor is the histidine 264.

It belongs to the class I-like SAM-binding methyltransferase superfamily. Cation-independent O-methyltransferase family. COMT subfamily.

The catalysed reaction is (+)-6a-hydroxymaackiain + S-adenosyl-L-methionine = (+)-pisatin + S-adenosyl-L-homocysteine + H(+). It catalyses the reaction a 4'-hydroxyisoflavone + S-adenosyl-L-methionine = a 4'-methoxyisoflavone + S-adenosyl-L-homocysteine + H(+). In terms of biological role, methyltransferase involved in the phytoalexin pisatin biosynthesis. Has both 3- and 4'-O-methyltransferase activities. Can use (+)-6a-hydroxymaackiain, 2,7,4'-trihydroxyisoflavanone and with much less activity (+)-medicarpin as substrates, but not (-)-6a-hydroxymaackiain, daidzein, formononetin or isoliquiritigenin. May be involved in formononetin biosynthesis. The protein is (+)-6a-hydroxymaackiain 3-O-methyltransferase 1 (HMM1) of Pisum sativum (Garden pea).